The sequence spans 234 residues: Leucyl/phenylalanyl-tRNA--protein transferase (234 aa).

Belongs to the L/F-transferase family.

The protein resides in the cytoplasm. It carries out the reaction N-terminal L-lysyl-[protein] + L-leucyl-tRNA(Leu) = N-terminal L-leucyl-L-lysyl-[protein] + tRNA(Leu) + H(+). The enzyme catalyses N-terminal L-arginyl-[protein] + L-leucyl-tRNA(Leu) = N-terminal L-leucyl-L-arginyl-[protein] + tRNA(Leu) + H(+). It catalyses the reaction L-phenylalanyl-tRNA(Phe) + an N-terminal L-alpha-aminoacyl-[protein] = an N-terminal L-phenylalanyl-L-alpha-aminoacyl-[protein] + tRNA(Phe). In terms of biological role, functions in the N-end rule pathway of protein degradation where it conjugates Leu, Phe and, less efficiently, Met from aminoacyl-tRNAs to the N-termini of proteins containing an N-terminal arginine or lysine. In Myxococcus xanthus (strain DK1622), this protein is Leucyl/phenylalanyl-tRNA--protein transferase.